The sequence spans 434 residues: Alpha-enolase (434 aa).

Serine 2 carries the N-acetylserine modification. Lysine 5 bears the N6-acetyllysine mark. Phosphoserine is present on serine 27. Mg(2+) is bound at residue serine 40. The residue at position 44 (tyrosine 44) is a Phosphotyrosine. Lysine 60 is subject to N6-acetyllysine; alternate. Lysine 60 bears the N6-succinyllysine; alternate mark. N6-acetyllysine is present on residues lysine 64 and lysine 71. An N6-acetyllysine; alternate modification is found at lysine 89. At lysine 89 the chain carries N6-succinyllysine; alternate. Lysine 92 and lysine 126 each carry N6-acetyllysine. Positions 158 and 167 each coordinate substrate. Lysine 193 and lysine 199 each carry N6-acetyllysine. Residue lysine 202 is modified to N6-acetyllysine; alternate. Lysine 202 is covalently cross-linked (Glycyl lysine isopeptide (Lys-Gly) (interchain with G-Cter in SUMO2); alternate). The active-site Proton donor is glutamate 210. Lysine 228 and lysine 233 each carry N6-acetyllysine; alternate. The residue at position 228 (lysine 228) is an N6-succinyllysine; alternate. Lysine 228 carries the N6-(2-hydroxyisobutyryl)lysine; alternate modification. An N6-malonyllysine; alternate modification is found at lysine 233. Aspartate 245 contacts Mg(2+). Serine 254 is subject to Phosphoserine. The residue at position 256 (lysine 256) is an N6-acetyllysine. 2 positions are modified to phosphoserine: serine 263 and serine 272. Lysine 281 is modified (N6-acetyllysine; alternate). At lysine 281 the chain carries N6-(2-hydroxyisobutyryl)lysine; alternate. Lysine 285 carries the N6-acetyllysine modification. The residue at position 287 (tyrosine 287) is a Phosphotyrosine. Phosphoserine is present on serine 291. Residues glutamate 293 and aspartate 318 each contribute to the Mg(2+) site. The substrate site is built by glutamate 293 and aspartate 318. An N6-acetyllysine mark is found at lysine 335 and lysine 343. Residue lysine 343 is the Proton acceptor of the active site. Substrate-binding positions include 370 to 373 and lysine 394; that span reads SHRS. The segment at 405 to 434 is required for interaction with PLG; sequence AKYNQLLRIEEELGSKAKFAGRNFRNPLAK. An N6-acetyllysine modification is found at lysine 406. Lysine 420 is subject to N6-acetyllysine; alternate. Lysine 420 carries the N6-succinyllysine; alternate modification. Position 420 is an N6-malonyllysine; alternate (lysine 420).

The protein belongs to the enolase family. Mammalian enolase is composed of 3 isozyme subunits, alpha, beta and gamma, which can form homodimers or heterodimers which are cell-type and development-specific. ENO1 interacts with PLG in the neuronal plasma membrane and promotes its activation. The C-terminal lysine is required for this binding. Interacts with ENO4 and PGAM2. Interacts with CMTM6. Mg(2+) is required as a cofactor. Post-translationally, ISGylated. In terms of processing, lysine 2-hydroxyisobutyrylation (Khib) by p300/EP300 activates the phosphopyruvate hydratase activity.

The protein localises to the cytoplasm. It is found in the cell membrane. The catalysed reaction is (2R)-2-phosphoglycerate = phosphoenolpyruvate + H2O. It participates in carbohydrate degradation; glycolysis; pyruvate from D-glyceraldehyde 3-phosphate: step 4/5. Glycolytic enzyme the catalyzes the conversion of 2-phosphoglycerate to phosphoenolpyruvate. In addition to glycolysis, involved in various processes such as growth control, hypoxia tolerance and allergic responses. May also function in the intravascular and pericellular fibrinolytic system due to its ability to serve as a receptor and activator of plasminogen on the cell surface of several cell-types such as leukocytes and neurons. Stimulates immunoglobulin production. This Macaca fascicularis (Crab-eating macaque) protein is Alpha-enolase (ENO1).